We begin with the raw amino-acid sequence, 244 residues long: Protein DCG1 (244 aa).

This sequence belongs to the HyuE racemase family.

The polypeptide is Protein DCG1 (DCG1) (Saccharomyces cerevisiae (strain ATCC 204508 / S288c) (Baker's yeast)).